The primary structure comprises 232 residues: Protein FAM246B (232 aa).

Over residues E19 to P31 the composition is skewed to basic and acidic residues. Disordered stretches follow at residues E19–G47, A80–E101, A151–L179, and A191–D232. Basic residues predominate over residues A211–M220.

Belongs to the FAM246 family.

This is Protein FAM246B from Homo sapiens (Human).